Reading from the N-terminus, the 88-residue chain is Phosphocarrier protein HPr (88 aa).

The region spanning 1–88 (MVVKTVRVLN…RLFQNKFEEE (88 aa)) is the HPr domain. His-15 acts as the Pros-phosphohistidine intermediate in catalysis. Ser-46 is subject to Phosphoserine; by HPrK/P.

It belongs to the HPr family.

The protein localises to the cytoplasm. With respect to regulation, phosphorylation on Ser-46 inhibits the phosphoryl transfer from enzyme I to HPr. General (non sugar-specific) component of the phosphoenolpyruvate-dependent sugar phosphotransferase system (sugar PTS). This major carbohydrate active-transport system catalyzes the phosphorylation of incoming sugar substrates concomitantly with their translocation across the cell membrane. The phosphoryl group from phosphoenolpyruvate (PEP) is transferred to the phosphoryl carrier protein HPr by enzyme I. Phospho-HPr then transfers it to the PTS EIIA domain. The polypeptide is Phosphocarrier protein HPr (ptsH) (Treponema pallidum (strain Nichols)).